Here is a 311-residue protein sequence, read N- to C-terminus: Burkholderia TALE-like protein 3 (311 aa).

A Cryptic repeat -1 repeat occupies 19–50 (LSPFECLKIEKHSGGADALEFISNKYDALTQV). A Cryptic repeat 0 repeat occupies 51-83 (LSRADILKIACHDCAAHALQAVLDYEQVFRQRG). 6 Core repeat repeats span residues 84-116 (FARADIIKITGNGGGAQALKAVVVHGPTLNECG), 117-149 (FSQADIVRIADNIGGAQALKAVLEHGPTLNERD), 150-182 (YSGADIVKIAGNGGGARALKAVVMHGPTLCESG), 183-215 (YSGADIVKIASNGGGAQALEAVAMHGSTLCERG), 216-248 (YCRTDIAKIAGNGGGAQALKAIVMHGPTLCERG), and 249-281 (YSRTDIVKIADNNGGAQALKAVFEHGPALTQAG). The Cryptic repeat +1 repeat unit spans residues 282–311 (RSNEDIVNMAARTGAAGQIRKMAAQLSGRQ).

The protein belongs to the transcription activator-like effector (TALE) family. Bat subfamily.

In terms of biological role, does not bind DNA, probably because it has too few core repeats. This Mycetohabitans rhizoxinica (strain DSM 19002 / CIP 109453 / HKI 454) (Paraburkholderia rhizoxinica) protein is Burkholderia TALE-like protein 3.